The primary structure comprises 1010 residues: Contactin-1 (1010 aa).

The N-terminal stretch at 1-19 (MRFFISHLVTLCFIFCVAD) is a signal peptide. Ig-like C2-type domains are found at residues 33-123 (PVFE…ATLS), 132-215 (PEEH…KSVF), 232-317 (PADI…ARVY), 322-398 (PEWV…AELK), 404-491 (PTFE…GVLE), and 496-592 (TRIT…LVVR). Cystine bridges form between C57–C106 and C150–C203. Residues N200 and N249 are each glycosylated (N-linked (GlcNAc...) asparagine). Cysteines 254 and 301 form a disulfide. A glycan (N-linked (GlcNAc...) asparagine) is linked at N329. 2 cysteine pairs are disulfide-bonded: C343/C382 and C427/C475. N448, N464, N485, and N512 each carry an N-linked (GlcNAc...) asparagine glycan. An intrachain disulfide couples C517 to C574. Residue N582 is glycosylated (N-linked (GlcNAc...) asparagine). Fibronectin type-III domains lie at 597-695 (PPGG…TEGA), 700-797 (APSD…SAQD), 802-897 (VPTD…APPS), and 899-990 (RPRI…TAGV). A compositionally biased stretch (polar residues) spans 679-689 (GTGEPSMPSQR). The disordered stretch occupies residues 679-708 (GTGEPSMPSQRIRTEGAPPNVAPSDVGGGG). N924 is a glycosylation site (N-linked (GlcNAc...) asparagine). S984 is lipidated: GPI-anchor amidated serine. Positions 985-1010 (GATAGVPTLLLGLVLPALGVLAYSGF) are cleaved as a propeptide — removed in mature form.

Belongs to the immunoglobulin superfamily. Contactin family. As to quaternary structure, interacts with TNR.

It is found in the cell membrane. Its function is as follows. Mediates cell surface interactions during nervous system development. Interaction with TNR enhances the neurite outgrowth. In Gallus gallus (Chicken), this protein is Contactin-1 (CNTN1).